Consider the following 755-residue polypeptide: Kojibiose phosphorylase (755 aa).

Residue Trp333–Asp334 participates in substrate binding. Glu473 functions as the Proton donor in the catalytic mechanism. Residue Lys573 to Gln574 participates in substrate binding.

Belongs to the glycosyl hydrolase 65 family.

It catalyses the reaction kojibiose + phosphate = beta-D-glucose 1-phosphate + D-glucose. Functionally, in vitro catalyzes the phosphorolysis of D-kojibiose into beta-D-glucose 1-phosphate and D-glucose. No other disaccharides tested substitute for D-kojibiose. In the reverse direction disaccharides can be formed from beta-D-glucose 1-phosphate plus D-glucose, L-sorbose, D-sorbitol, L-iditol or 1,5-anhydro-D-glucitol, but with low efficiency. The beta-D-glucose 1-phosphate product is the substrate for YcjU (AC P77366), the next apparent enzyme in the putative biochemical pathway encoded in this locus (yjcM to ycjW). The polypeptide is Kojibiose phosphorylase (ycjT) (Escherichia coli (strain K12)).